Here is a 240-residue protein sequence, read N- to C-terminus: UDP-2,3-diacylglucosamine hydrolase (240 aa).

Residues D8, H10, D41, N79, and H114 each coordinate Mn(2+). 79 to 80 (NR) is a binding site for substrate. Substrate is bound by residues D122, S160, N164, K167, and H195. The Mn(2+) site is built by H195 and H197.

It belongs to the LpxH family. Requires Mn(2+) as cofactor.

It localises to the cell inner membrane. It catalyses the reaction UDP-2-N,3-O-bis[(3R)-3-hydroxytetradecanoyl]-alpha-D-glucosamine + H2O = 2-N,3-O-bis[(3R)-3-hydroxytetradecanoyl]-alpha-D-glucosaminyl 1-phosphate + UMP + 2 H(+). It functions in the pathway glycolipid biosynthesis; lipid IV(A) biosynthesis; lipid IV(A) from (3R)-3-hydroxytetradecanoyl-[acyl-carrier-protein] and UDP-N-acetyl-alpha-D-glucosamine: step 4/6. In terms of biological role, hydrolyzes the pyrophosphate bond of UDP-2,3-diacylglucosamine to yield 2,3-diacylglucosamine 1-phosphate (lipid X) and UMP by catalyzing the attack of water at the alpha-P atom. Involved in the biosynthesis of lipid A, a phosphorylated glycolipid that anchors the lipopolysaccharide to the outer membrane of the cell. The sequence is that of UDP-2,3-diacylglucosamine hydrolase from Escherichia coli O127:H6 (strain E2348/69 / EPEC).